A 591-amino-acid polypeptide reads, in one-letter code: Fidgetin-like protein 1 (591 aa).

Disordered stretches follow at residues 1–117 (MYSP…KSSL) and 223–249 (GQEP…SQPI). A compositionally biased stretch (basic and acidic residues) spans 17 to 26 (KRPETEENRG). Positions 76–93 (DDDPESIVIDEDDEEDEP) are enriched in acidic residues. The segment covering 237–249 (RQSSSQSNHSQPI) has biased composition (polar residues). ATP-binding positions include A319 and 359 to 364 (GTGKTM).

The protein belongs to the AAA ATPase family. As to quaternary structure, hexamer. Mg(2+) is required as a cofactor.

Its subcellular location is the nucleus. The catalysed reaction is ATP + H2O = ADP + phosphate + H(+). Has a role in spindle assembly which acts in the progression through mitosis during embryogenesis. Required for fertility. The polypeptide is Fidgetin-like protein 1 (figl-1) (Caenorhabditis briggsae).